A 292-amino-acid polypeptide reads, in one-letter code: MSMPATSTKTTKLATSLIDEYALLGWRAMLTEVNLSPKPGLVDRINCGAHKDMALEDFHRSALAIQGWLPRFIEFGACSAEMAPEAVLHGLRPIGMACEGDMFRATAGVNTHKGSIFSLGLLCAAIGRLLQLNQSLTPTTVCSTAASFCRGLTDRELRTNNSQLTAGQRLYQQLGLTGARGEAEAGYPLVINHALPHYLTLLDQGLDPELALLDTLLLLMAINGDTNVASRGGEGGLRWLQREAQTLLQKGGIRTPADLDYLRQFDRECIERNLSPGGSADLLILTWFLAQI.

It belongs to the CitG/MdcB family.

It catalyses the reaction 3'-dephospho-CoA + ATP = 2'-(5''-triphospho-alpha-D-ribosyl)-3'-dephospho-CoA + adenine. Functionally, catalyzes the formation of 2-(5''-triphosphoribosyl)-3'-dephosphocoenzyme-A, the precursor of the prosthetic group of the holo-acyl carrier protein (gamma chain) of citrate lyase, from ATP and dephospho-CoA. The polypeptide is 2-(5''-triphosphoribosyl)-3'-dephosphocoenzyme-A synthase (Escherichia coli O17:K52:H18 (strain UMN026 / ExPEC)).